A 489-amino-acid polypeptide reads, in one-letter code: Rhamnulokinase (489 aa).

13–17 (ASSGR) lines the ATP pocket. Cys-68 and Cys-222 form a disulfide bridge. Substrate contacts are provided by residues Gly-83 and 236 to 238 (HDT). Asp-237 functions as the Proton acceptor in the catalytic mechanism. Thr-259 contacts ATP. Position 296 (Asn-296) interacts with substrate. Gln-304 contributes to the ATP binding site. Cys-353 and Cys-370 are joined by a disulfide. Residue Gly-402 coordinates ATP. Cys-413 and Cys-417 are joined by a disulfide.

It belongs to the rhamnulokinase family. Mg(2+) serves as cofactor.

It carries out the reaction L-rhamnulose + ATP = L-rhamnulose 1-phosphate + ADP + H(+). It functions in the pathway carbohydrate degradation; L-rhamnose degradation; glycerone phosphate from L-rhamnose: step 2/3. Its function is as follows. Involved in the catabolism of L-rhamnose (6-deoxy-L-mannose). Catalyzes the transfer of the gamma-phosphate group from ATP to the 1-hydroxyl group of L-rhamnulose to yield L-rhamnulose 1-phosphate. This is Rhamnulokinase from Salmonella typhimurium (strain LT2 / SGSC1412 / ATCC 700720).